The following is a 497-amino-acid chain: Membrane-bound lytic murein transglycosylase F (497 aa).

Residues 1–29 (MFFRPDFRPRCAKWLIATGLFLMLGACVE) form the signal peptide. The non-LT domain stretch occupies residues 30-267 (KPTTLERVKE…RLKDRYYGHV (238 aa)). The LT domain stretch occupies residues 268–497 (DVLGYVGAYT…PASSPEKPAL (230 aa)). Glu-314 is a catalytic residue. The interval 464–497 (VADGNLHVPGVDKTQPPAPTAPVVPASSPEKPAL) is disordered. A compositionally biased stretch (low complexity) spans 486–497 (VVPASSPEKPAL).

In the N-terminal section; belongs to the bacterial solute-binding protein 3 family. This sequence in the C-terminal section; belongs to the transglycosylase Slt family.

The protein resides in the cell outer membrane. It catalyses the reaction Exolytic cleavage of the (1-&gt;4)-beta-glycosidic linkage between N-acetylmuramic acid (MurNAc) and N-acetylglucosamine (GlcNAc) residues in peptidoglycan, from either the reducing or the non-reducing ends of the peptidoglycan chains, with concomitant formation of a 1,6-anhydrobond in the MurNAc residue.. In terms of biological role, murein-degrading enzyme that degrades murein glycan strands and insoluble, high-molecular weight murein sacculi, with the concomitant formation of a 1,6-anhydromuramoyl product. Lytic transglycosylases (LTs) play an integral role in the metabolism of the peptidoglycan (PG) sacculus. Their lytic action creates space within the PG sacculus to allow for its expansion as well as for the insertion of various structures such as secretion systems and flagella. In Pseudomonas syringae pv. tomato (strain ATCC BAA-871 / DC3000), this protein is Membrane-bound lytic murein transglycosylase F.